A 68-amino-acid chain; its full sequence is Neuronal regeneration-related protein (68 aa).

Interacts with FLNA. Interacts with the latency-associated peptides (LAP) of TGFB1 and TGFB2; the interaction results in a decrease in TGFB autoinduction. Post-translationally, phosphorylated on Ser-59. Phosphorylation decreases stability and activity.

It localises to the cytoplasm. In terms of biological role, may have roles in neural function. Ectopic expression promotes axonal regeneration. Also augments motility of gliomas. May also have roles in cellular differentiation. Induces differentiation of fibroblast into myofibroblast and myofibroblast ameboid migration. Increases retinoic-acid regulation of lipid-droplet biogenesis. Down-regulates the expression of TGFB1 and TGFB2 but not of TGFB3. May play a role in the regulation of alveolar generation. This chain is Neuronal regeneration-related protein (Nrep), found in Rattus norvegicus (Rat).